The following is a 36-amino-acid chain: Cytochrome b6-f complex subunit 7 (36 aa).

A helical transmembrane segment spans residues 9–29; the sequence is NGAFIMIGLTLLGLAWGFVII.

This sequence belongs to the PetM family. The 4 large subunits of the cytochrome b6-f complex are cytochrome b6, subunit IV (17 kDa polypeptide, PetD), cytochrome f and the Rieske protein, while the 4 small subunits are PetG, PetL, PetM and PetN. The complex functions as a dimer.

Its subcellular location is the cellular thylakoid membrane. Functionally, component of the cytochrome b6-f complex, which mediates electron transfer between photosystem II (PSII) and photosystem I (PSI), cyclic electron flow around PSI, and state transitions. In Synechocystis sp. (strain ATCC 27184 / PCC 6803 / Kazusa), this protein is Cytochrome b6-f complex subunit 7.